A 378-amino-acid polypeptide reads, in one-letter code: Protein RecA (378 aa).

Residue 79–86 (GPESSGKT) coordinates ATP.

The protein belongs to the RecA family.

It localises to the cytoplasm. In terms of biological role, can catalyze the hydrolysis of ATP in the presence of single-stranded DNA, the ATP-dependent uptake of single-stranded DNA by duplex DNA, and the ATP-dependent hybridization of homologous single-stranded DNAs. It interacts with LexA causing its activation and leading to its autocatalytic cleavage. The protein is Protein RecA of Streptococcus pyogenes serotype M49 (strain NZ131).